A 155-amino-acid polypeptide reads, in one-letter code: 2-C-methyl-D-erythritol 2,4-cyclodiphosphate synthase (155 aa).

A divalent metal cation contacts are provided by D8 and H10. 4-CDP-2-C-methyl-D-erythritol 2-phosphate contacts are provided by residues 8-10 and 34-35; these read DVH and HS. H42 is an a divalent metal cation binding site. Residues 56-58, 61-65, 100-106, 132-135, F139, and K142 contribute to the 4-CDP-2-C-methyl-D-erythritol 2-phosphate site; these read DIG, FPDSD, AQKPKML, and TTEE.

Belongs to the IspF family. In terms of assembly, homotrimer. A divalent metal cation serves as cofactor.

It carries out the reaction 4-CDP-2-C-methyl-D-erythritol 2-phosphate = 2-C-methyl-D-erythritol 2,4-cyclic diphosphate + CMP. It participates in isoprenoid biosynthesis; isopentenyl diphosphate biosynthesis via DXP pathway; isopentenyl diphosphate from 1-deoxy-D-xylulose 5-phosphate: step 4/6. Functionally, involved in the biosynthesis of isopentenyl diphosphate (IPP) and dimethylallyl diphosphate (DMAPP), two major building blocks of isoprenoid compounds. Catalyzes the conversion of 4-diphosphocytidyl-2-C-methyl-D-erythritol 2-phosphate (CDP-ME2P) to 2-C-methyl-D-erythritol 2,4-cyclodiphosphate (ME-CPP) with a corresponding release of cytidine 5-monophosphate (CMP). The protein is 2-C-methyl-D-erythritol 2,4-cyclodiphosphate synthase of Clostridium botulinum (strain 657 / Type Ba4).